A 462-amino-acid chain; its full sequence is L-seryl-tRNA(Sec) selenium transferase (462 aa).

The residue at position 295 (lysine 295) is an N6-(pyridoxal phosphate)lysine.

Belongs to the SelA family. In terms of assembly, homodecamer; pentamer of dimers. Binds only one seryl-tRNA(Sec) per dimer. The cofactor is pyridoxal 5'-phosphate.

Its subcellular location is the cytoplasm. It carries out the reaction L-seryl-tRNA(Sec) + selenophosphate + H(+) = L-selenocysteinyl-tRNA(Sec) + phosphate. Its pathway is aminoacyl-tRNA biosynthesis; selenocysteinyl-tRNA(Sec) biosynthesis; selenocysteinyl-tRNA(Sec) from L-seryl-tRNA(Sec) (bacterial route): step 1/1. Its function is as follows. Converts seryl-tRNA(Sec) to selenocysteinyl-tRNA(Sec) required for selenoprotein biosynthesis. This chain is L-seryl-tRNA(Sec) selenium transferase, found in Klebsiella pneumoniae (strain 342).